Reading from the N-terminus, the 341-residue chain is Lipoyl synthase (341 aa).

The [4Fe-4S] cluster site is built by C85, C90, C96, C111, C115, C118, and S325. The region spanning F97–K314 is the Radical SAM core domain.

It belongs to the radical SAM superfamily. Lipoyl synthase family. [4Fe-4S] cluster is required as a cofactor.

It localises to the cytoplasm. The catalysed reaction is [[Fe-S] cluster scaffold protein carrying a second [4Fe-4S](2+) cluster] + N(6)-octanoyl-L-lysyl-[protein] + 2 oxidized [2Fe-2S]-[ferredoxin] + 2 S-adenosyl-L-methionine + 4 H(+) = [[Fe-S] cluster scaffold protein] + N(6)-[(R)-dihydrolipoyl]-L-lysyl-[protein] + 4 Fe(3+) + 2 hydrogen sulfide + 2 5'-deoxyadenosine + 2 L-methionine + 2 reduced [2Fe-2S]-[ferredoxin]. Its pathway is protein modification; protein lipoylation via endogenous pathway; protein N(6)-(lipoyl)lysine from octanoyl-[acyl-carrier-protein]: step 2/2. In terms of biological role, catalyzes the radical-mediated insertion of two sulfur atoms into the C-6 and C-8 positions of the octanoyl moiety bound to the lipoyl domains of lipoate-dependent enzymes, thereby converting the octanoylated domains into lipoylated derivatives. This is Lipoyl synthase from Pseudomonas fluorescens (strain SBW25).